The primary structure comprises 2282 residues: Ectopic P granules protein 5 homolog (2282 aa).

It belongs to the EPG5 family.

In terms of biological role, involved in autophagy. In Aedes aegypti (Yellowfever mosquito), this protein is Ectopic P granules protein 5 homolog.